The sequence spans 483 residues: Arginine/agmatine antiporter (483 aa).

The next 12 membrane-spanning stretches (helical) occupy residues 11–33 (ILGT…IFSL), 48–70 (LAWM…LSII), 90–112 (VGFT…YAVI), 127–149 (GGNT…YIVL), 156–178 (SFVN…LITA), 209–228 (TMLV…VISG), 241–263 (ILGF…GSLF), 293–315 (TGLL…EIPY), 335–357 (APSF…VYFS), 367–389 (ITGV…FSLS), 415–435 (LWLI…LLAL), and 458–477 (EILK…FLFS).

This sequence belongs to the amino acid-polyamine-organocation (APC) superfamily. Basic amino acid/polyamine antiporter (APA) (TC 2.A.3.2) family.

It localises to the cell inner membrane. Functionally, catalyzes the exchange of L-arginine for agmatine. The arginine uptake by the bacterium in the macrophage may be a virulence factor against the host innate immune response. The sequence is that of Arginine/agmatine antiporter (aaxC) from Chlamydia trachomatis serovar L2 (strain ATCC VR-902B / DSM 19102 / 434/Bu).